The primary structure comprises 750 residues: Catalase-peroxidase 1 (750 aa).

Residues 90-238 (WHSAGTYRVM…VSAAHMGLIY (149 aa)) constitute a cross-link (tryptophyl-tyrosyl-methioninium (Trp-Tyr) (with M-264)). Residue histidine 91 is the Proton acceptor of the active site. The disordered stretch occupies residues 199–218 (NEGHKESGVIDGSESKKGHK). Basic and acidic residues predominate over residues 200 to 218 (EGHKESGVIDGSESKKGHK). The segment at residues 238–264 (YVNPEGPDGIPDPVAAARDIRTTFSRM) is a cross-link (tryptophyl-tyrosyl-methioninium (Tyr-Met) (with W-90)). Histidine 279 contacts heme b.

The protein belongs to the peroxidase family. Peroxidase/catalase subfamily. As to quaternary structure, homodimer or homotetramer. Predominantly homodimeric. The cofactor is heme b. Post-translationally, formation of the three residue Trp-Tyr-Met cross-link is important for the catalase, but not the peroxidase activity of the enzyme.

The protein resides in the cytoplasm. It catalyses the reaction H2O2 + AH2 = A + 2 H2O. The enzyme catalyses 2 H2O2 = O2 + 2 H2O. In terms of biological role, bifunctional enzyme with both catalase and broad-spectrum peroxidase activity. The protein is Catalase-peroxidase 1 of Pyricularia oryzae (strain 70-15 / ATCC MYA-4617 / FGSC 8958) (Rice blast fungus).